The chain runs to 549 residues: Chaperonin GroEL (549 aa).

ATP is bound by residues 29 to 32 (TAGP), lysine 50, 86 to 90 (DGTTT), glycine 418, and aspartate 499.

The protein belongs to the chaperonin (HSP60) family. In terms of assembly, forms a cylinder of 14 subunits composed of two heptameric rings stacked back-to-back. Interacts with the co-chaperonin GroES.

Its subcellular location is the cytoplasm. It catalyses the reaction ATP + H2O + a folded polypeptide = ADP + phosphate + an unfolded polypeptide.. Functionally, together with its co-chaperonin GroES, plays an essential role in assisting protein folding. The GroEL-GroES system forms a nano-cage that allows encapsulation of the non-native substrate proteins and provides a physical environment optimized to promote and accelerate protein folding. In Wolbachia sp. subsp. Drosophila simulans (strain wRi), this protein is Chaperonin GroEL.